Reading from the N-terminus, the 160-residue chain is Transcriptional repressor NrdR (160 aa).

The segment covering 1–11 (MRCPSCNSLDT) has biased composition (polar residues). The disordered stretch occupies residues 1-20 (MRCPSCNSLDTQVKDSRPTE). A zinc finger spans residues 3–34 (CPSCNSLDTQVKDSRPTEDSAVIRRRRVCMAC). The 91-residue stretch at 49–139 (LTVIKRNGRR…VYRNFREAKD (91 aa)) folds into the ATP-cone domain.

This sequence belongs to the NrdR family. Requires Zn(2+) as cofactor.

Functionally, negatively regulates transcription of bacterial ribonucleotide reductase nrd genes and operons by binding to NrdR-boxes. The protein is Transcriptional repressor NrdR of Nitrobacter hamburgensis (strain DSM 10229 / NCIMB 13809 / X14).